Reading from the N-terminus, the 309-residue chain is Homoserine kinase (309 aa).

Position 91–101 (91–101 (PIGSGLGSSAC)) interacts with ATP.

It belongs to the GHMP kinase family. Homoserine kinase subfamily.

The protein resides in the cytoplasm. The catalysed reaction is L-homoserine + ATP = O-phospho-L-homoserine + ADP + H(+). It functions in the pathway amino-acid biosynthesis; L-threonine biosynthesis; L-threonine from L-aspartate: step 4/5. Its function is as follows. Catalyzes the ATP-dependent phosphorylation of L-homoserine to L-homoserine phosphate. In Escherichia fergusonii (strain ATCC 35469 / DSM 13698 / CCUG 18766 / IAM 14443 / JCM 21226 / LMG 7866 / NBRC 102419 / NCTC 12128 / CDC 0568-73), this protein is Homoserine kinase.